A 620-amino-acid polypeptide reads, in one-letter code: MKLSTLFALVLLLQSTAILSLVAAEATTQYGGYLPPPVTSQPPPSSIGLSPPSAPTTTPPSRGHVPSPRHAPPRHAYPPPSHGHLPPSVGGPPPHRGHLPPSRGFNPPPSPVISPSHPPPSYGAPPPSHGPGHLPSHGQRPPSPSHGHAPPSGGHTPPRGQHPPSHRRPSPPSRHGHPPPPTYAQPPPTPIYSPSPQVQPPPTYSPPPPTHVQPTPSPPSRGHQPQPPTHRHAPPTHRHAPPTHQPSPLRHLPPSPRRQPQPPTYSPPPPAYAQSPQPSPTYSPPPPTYSPPPPSPIYSPPPPAYSPSPPPTPTPTFSPPPPAYSPPPTYSPPPPTYLPLPSSPIYSPPPPVYSPPPPPSYSPPPPTYLPPPPPSSPPPPSFSPPPPTYEQSPPPPPAYSPPLPAPPTYSPPPPTYSPPPPTYAQPPPLPPTYSPPPPAYSPPPPPTYSPPPPTYSPPPPAYAQPPPPPPTYSPPPPAYSPPPPSPIYSPPPPQVQPLPPTFSPPPPRRIHLPPPPHRQPRPPTPTYGQPPSPPTFSPPPPRQIHSPPPPHWQPRTPTPTYGQPPSPPTFSAPPPRQIHSPPPPHRQPRPPTPTYGQPPSPPTTYSPPSPPPYGLLLSTP.

Positions 1-20 (MKLSTLFALVLLLQSTAILS) are cleaved as a signal peptide. The span at 34 to 45 (LPPPVTSQPPPS) shows a compositional bias: pro residues. Residues 34-620 (LPPPVTSQPP…PPYGLLLSTP (587 aa)) form a disordered region. The H-A-P-P repeat unit spans residues 70 to 73 (HAPP). Residues 106-129 (NPPPSPVISPSHPPPSYGAPPPSH) show a composition bias toward pro residues. Residues 145-163 (SHGHAPPSGGHTPPRGQHP) show a composition bias toward low complexity. The H-A-P-P repeat unit spans residues 148–151 (HAPP). The segment covering 164–177 (PSHRRPSPPSRHGH) has biased composition (basic residues). Pro residues predominate over residues 178 to 219 (PPPPTYAQPPPTPIYSPSPQVQPPPTYSPPPPTHVQPTPSPP). Positions 205–620 (SPPPPTHVQP…PPYGLLLSTP (416 aa)) are contains the Ser-Pro(4) repeats. A run of 2 repeats spans residues 229 to 235 (THRHAPP) and 236 to 242 (THRHAPP). The segment covering 229–241 (THRHAPPTHRHAP) has biased composition (basic residues). The segment at 229–242 (THRHAPPTHRHAPP) is 2 X 7 AA tandem repeats of T-H-R-H-A-P-P. 2 stretches are compositionally biased toward pro residues: residues 251-552 (HLPP…PPHW) and 562-613 (GQPP…PPPY). Residues 499-600 (PPTFSPPPPR…PTPTYGQPPS (102 aa)) are 3 X approximate tandem repeats.

In terms of processing, hydroxylated on proline residues in the S-P-P-P-P repeat. O-glycosylated on hydroxyprolines. In terms of tissue distribution, expressed in the tip of the emerging lateral roots.

Its subcellular location is the secreted. It is found in the primary cell wall. Functionally, has a specialized structural function, possibly in the mechanical penetration of the cortex and epidermis of the main root. In Nicotiana tabacum (Common tobacco), this protein is Extensin (HRGPNT3).